The primary structure comprises 563 residues: Adenine deaminase (563 aa).

It belongs to the metallo-dependent hydrolases superfamily. Adenine deaminase family. Requires Mn(2+) as cofactor.

The enzyme catalyses adenine + H2O + H(+) = hypoxanthine + NH4(+). This chain is Adenine deaminase, found in Lactiplantibacillus plantarum (strain ATCC BAA-793 / NCIMB 8826 / WCFS1) (Lactobacillus plantarum).